The chain runs to 64 residues: Large ribosomal subunit protein bL35 (64 aa).

Residues 1–17 (MKQKTHSGIKKRIKKTG) show a composition bias toward basic residues. The tract at residues 1-64 (MKQKTHSGIK…KRVNRLLGEG (64 aa)) is disordered. Basic and acidic residues predominate over residues 21 to 33 (LRREQANRRHLLE).

This sequence belongs to the bacterial ribosomal protein bL35 family.

The polypeptide is Large ribosomal subunit protein bL35 (Corynebacterium kroppenstedtii (strain DSM 44385 / JCM 11950 / CIP 105744 / CCUG 35717)).